Consider the following 106-residue polypeptide: Starvation responsive small protein A (106 aa).

The chain crosses the membrane as a helical span at residues 15-32; sequence ILLVNAGLISAYGVRIIF.

Its subcellular location is the cell membrane. Functionally, involved in starvation response and aggregation stage of the life cycle. May be involved in fruiting body morphogenesis and spore formation. The protein is Starvation responsive small protein A of Dictyostelium discoideum (Social amoeba).